The chain runs to 395 residues: Elongation factor Tu (395 aa).

A tr-type G domain is found at 10–204; that stretch reads KPHVNIGTIG…TVDSYIPEPA (195 aa). The segment at 19–26 is G1; that stretch reads GHVDHGKT. 19–26 is a binding site for GTP; sequence GHVDHGKT. Residue T26 participates in Mg(2+) binding. The G2 stretch occupies residues 60–64; the sequence is GITIN. Residues 81–84 are G3; sequence DAPG. Residues 81 to 85 and 136 to 139 contribute to the GTP site; these read DAPGH and NKTD. Residues 136–139 form a G4 region; sequence NKTD. The segment at 174 to 176 is G5; the sequence is SAL.

The protein belongs to the TRAFAC class translation factor GTPase superfamily. Classic translation factor GTPase family. EF-Tu/EF-1A subfamily. In terms of assembly, monomer.

It is found in the cytoplasm. The enzyme catalyses GTP + H2O = GDP + phosphate + H(+). Its function is as follows. GTP hydrolase that promotes the GTP-dependent binding of aminoacyl-tRNA to the A-site of ribosomes during protein biosynthesis. This is Elongation factor Tu from Leuconostoc mesenteroides subsp. mesenteroides (strain ATCC 8293 / DSM 20343 / BCRC 11652 / CCM 1803 / JCM 6124 / NCDO 523 / NBRC 100496 / NCIMB 8023 / NCTC 12954 / NRRL B-1118 / 37Y).